The chain runs to 158 residues: NAD(P)H-quinone oxidoreductase subunit J, chloroplastic (158 aa).

It belongs to the complex I 30 kDa subunit family. As to quaternary structure, NDH is composed of at least 16 different subunits, 5 of which are encoded in the nucleus.

Its subcellular location is the plastid. The protein localises to the chloroplast thylakoid membrane. It carries out the reaction a plastoquinone + NADH + (n+1) H(+)(in) = a plastoquinol + NAD(+) + n H(+)(out). It catalyses the reaction a plastoquinone + NADPH + (n+1) H(+)(in) = a plastoquinol + NADP(+) + n H(+)(out). Functionally, NDH shuttles electrons from NAD(P)H:plastoquinone, via FMN and iron-sulfur (Fe-S) centers, to quinones in the photosynthetic chain and possibly in a chloroplast respiratory chain. The immediate electron acceptor for the enzyme in this species is believed to be plastoquinone. Couples the redox reaction to proton translocation, and thus conserves the redox energy in a proton gradient. The protein is NAD(P)H-quinone oxidoreductase subunit J, chloroplastic of Aethionema cordifolium (Lebanon stonecress).